Reading from the N-terminus, the 296-residue chain is Chronophin (296 aa).

Catalysis depends on aspartate 25, which acts as the Nucleophile. The Mg(2+) site is built by aspartate 25 and aspartate 27. Aspartate 27 acts as the Proton donor in catalysis. Substrate is bound by residues 58–60 (SNN), histidine 182, and lysine 213. A Mg(2+)-binding site is contributed by aspartate 238.

The protein belongs to the HAD-like hydrolase superfamily. In terms of assembly, homodimer. Requires Mg(2+) as cofactor. In terms of tissue distribution, ubiquitously expressed (at protein level). Highly expressed in all the regions of central nerve system except the spinal cord. Also expressed at high level in liver and testis. In fetus, it is weakly expressed in all organs except brain.

It is found in the cytoplasm. The protein resides in the cytosol. The protein localises to the cytoskeleton. Its subcellular location is the cell projection. It localises to the ruffle membrane. It is found in the lamellipodium membrane. The protein resides in the cell membrane. The catalysed reaction is pyridoxal 5'-phosphate + H2O = pyridoxal + phosphate. It catalyses the reaction pyridoxine 5'-phosphate + H2O = pyridoxine + phosphate. The enzyme catalyses pyridoxamine + phosphate = pyridoxamine 5'-phosphate + H2O. It carries out the reaction O-phospho-L-seryl-[protein] + H2O = L-seryl-[protein] + phosphate. Its activity is regulated as follows. Inhibited by NaF, Zn(2+), Ca(2+), Mn(2+) and EDTA. Functionally, functions as a pyridoxal phosphate (PLP) phosphatase, which also catalyzes the dephosphorylation of pyridoxine 5'-phosphate (PNP) and pyridoxamine 5'-phosphate (PMP), with order of substrate preference PLP &gt; PNP &gt; PMP and therefore plays a role in vitamin B6 metabolism. Also functions as a protein serine phosphatase that specifically dephosphorylates 'Ser-3' in proteins of the actin-depolymerizing factor (ADF)/cofilin family like CFL1 and DSTN. Thereby, regulates cofilin-dependent actin cytoskeleton reorganization, being required for normal progress through mitosis and normal cytokinesis. Does not dephosphorylate phosphothreonines in LIMK1. Does not dephosphorylate peptides containing phosphotyrosine. In Homo sapiens (Human), this protein is Chronophin.